The following is an 806-amino-acid chain: LisH domain-containing protein ARMC9 (806 aa).

The LisH domain occupies Y7 to G39. The stretch at K194–C230 forms a coiled coil. Disordered regions lie at residues F576–K604, P650–I736, and N748–K806. The span at S579–K604 shows a compositional bias: acidic residues. The span at V655–M688 shows a compositional bias: polar residues. The segment covering S689 to S708 has biased composition (low complexity). Residues E759–P782 are compositionally biased toward polar residues. Over residues Q783–K806 the composition is skewed to low complexity.

The protein localises to the cytoplasm. It is found in the cytoskeleton. It localises to the cilium basal body. Its subcellular location is the cell projection. The protein resides in the cilium. The protein localises to the microtubule organizing center. It is found in the centrosome. It localises to the centriole. Involved in ciliogenesis. It is required for appropriate acetylation and polyglutamylation of ciliary microtubules, and regulation of cilium length. Acts as a positive regulator of hedgehog (Hh)signaling. The polypeptide is LisH domain-containing protein ARMC9 (armc9) (Xenopus laevis (African clawed frog)).